The chain runs to 295 residues: HTH-type transcriptional regulator TdfR (295 aa).

The region spanning 1–58 is the HTH lysR-type domain; that stretch reads MEFRQLRYFVAAAEEGNVGAAARRLHISQPPVTRQIHALEQHLGVLLFERSARGVQLT. Positions 18–37 form a DNA-binding region, H-T-H motif; sequence VGAAARRLHISQPPVTRQIH.

It belongs to the LysR transcriptional regulatory family.

Its subcellular location is the cytoplasm. Functionally, involved in the regulation of 3-chlorocatechol degradation. Transcriptional regulator of tfdB expression. Acts as a repressor in the absence of its effector (either 2-cis-chlorodiene lactone or chloromaleylacetate) but acts as an activator when its effector is present. The protein is HTH-type transcriptional regulator TdfR (tfdR) of Cupriavidus pinatubonensis (strain JMP 134 / LMG 1197) (Cupriavidus necator (strain JMP 134)).